Reading from the N-terminus, the 84-residue chain is Small ribosomal subunit protein uS15 (84 aa).

It belongs to the universal ribosomal protein uS15 family. In terms of assembly, part of the 30S ribosomal subunit. Forms a bridge to the 50S subunit in the 70S ribosome, contacting the 23S rRNA.

In terms of biological role, one of the primary rRNA binding proteins, it binds directly to 16S rRNA where it helps nucleate assembly of the platform of the 30S subunit by binding and bridging several RNA helices of the 16S rRNA. Its function is as follows. Forms an intersubunit bridge (bridge B4) with the 23S rRNA of the 50S subunit in the ribosome. The chain is Small ribosomal subunit protein uS15 from Thermosipho africanus (strain TCF52B).